We begin with the raw amino-acid sequence, 387 residues long: 1-deoxy-D-xylulose 5-phosphate reductoisomerase (387 aa).

Residues threonine 10, glycine 11, serine 12, valine 13, asparagine 38, and asparagine 119 each coordinate NADPH. A 1-deoxy-D-xylulose 5-phosphate-binding site is contributed by lysine 120. Glutamate 121 serves as a coordination point for NADPH. Aspartate 145 serves as a coordination point for Mn(2+). 4 residues coordinate 1-deoxy-D-xylulose 5-phosphate: serine 146, glutamate 147, serine 170, and histidine 193. A Mn(2+)-binding site is contributed by glutamate 147. An NADPH-binding site is contributed by glycine 199. 1-deoxy-D-xylulose 5-phosphate is bound by residues serine 206, asparagine 211, lysine 212, and glutamate 215. Glutamate 215 is a binding site for Mn(2+).

It belongs to the DXR family. Requires Mg(2+) as cofactor. Mn(2+) serves as cofactor.

It carries out the reaction 2-C-methyl-D-erythritol 4-phosphate + NADP(+) = 1-deoxy-D-xylulose 5-phosphate + NADPH + H(+). It participates in isoprenoid biosynthesis; isopentenyl diphosphate biosynthesis via DXP pathway; isopentenyl diphosphate from 1-deoxy-D-xylulose 5-phosphate: step 1/6. Functionally, catalyzes the NADPH-dependent rearrangement and reduction of 1-deoxy-D-xylulose-5-phosphate (DXP) to 2-C-methyl-D-erythritol 4-phosphate (MEP). The chain is 1-deoxy-D-xylulose 5-phosphate reductoisomerase from Wolbachia sp. subsp. Drosophila simulans (strain wRi).